A 75-amino-acid chain; its full sequence is Kappa-scoloptoxin(03)-Ssm1d (75 aa).

The signal sequence occupies residues 1–23 (MKLSMAILLVMALIIFTLDKNYS).

Belongs to the scoloptoxin-03 family. Post-translationally, contains 3 disulfide bonds. Expressed by the venom gland.

It localises to the secreted. In terms of biological role, inhibits voltage-gated potassium channels. This is Kappa-scoloptoxin(03)-Ssm1d from Scolopendra mutilans (Chinese red-headed centipede).